A 1145-amino-acid polypeptide reads, in one-letter code: Nucleolar protein 6 (1145 aa).

The tract at residues 1–46 (MQKKRNRAGPPQQEAASDDGEMSDSSDKMEVAQGKGKSAVKRAPDA) is disordered.

The protein belongs to the NRAP family. In terms of assembly, part of the small subunit (SSU) processome, composed of more than 70 proteins and the RNA chaperone small nucleolar RNA (snoRNA) U3.

It is found in the nucleus. The protein localises to the nucleolus. Its subcellular location is the chromosome. Part of the small subunit (SSU) processome, first precursor of the small eukaryotic ribosomal subunit. During the assembly of the SSU processome in the nucleolus, many ribosome biogenesis factors, an RNA chaperone and ribosomal proteins associate with the nascent pre-rRNA and work in concert to generate RNA folding, modifications, rearrangements and cleavage as well as targeted degradation of pre-ribosomal RNA by the RNA exosome. This is Nucleolar protein 6 (nol6) from Xenopus tropicalis (Western clawed frog).